Reading from the N-terminus, the 537-residue chain is Phosphoenolpyruvate carboxykinase (ATP) (537 aa).

Residues arginine 61, tyrosine 195, and lysine 201 each coordinate substrate. ATP is bound by residues lysine 201, histidine 220, and 236-244 (GLSGTGKTT). Mn(2+)-binding residues include lysine 201 and histidine 220. Aspartate 257 contributes to the Mn(2+) binding site. The ATP site is built by glutamate 285, arginine 323, and threonine 448. Arginine 323 is a substrate binding site.

Belongs to the phosphoenolpyruvate carboxykinase (ATP) family. The cofactor is Mn(2+).

It localises to the cytoplasm. The enzyme catalyses oxaloacetate + ATP = phosphoenolpyruvate + ADP + CO2. It functions in the pathway carbohydrate biosynthesis; gluconeogenesis. In terms of biological role, involved in the gluconeogenesis. Catalyzes the conversion of oxaloacetate (OAA) to phosphoenolpyruvate (PEP) through direct phosphoryl transfer between the nucleoside triphosphate and OAA. The chain is Phosphoenolpyruvate carboxykinase (ATP) from Azorhizobium caulinodans (strain ATCC 43989 / DSM 5975 / JCM 20966 / LMG 6465 / NBRC 14845 / NCIMB 13405 / ORS 571).